A 359-amino-acid polypeptide reads, in one-letter code: Uracil-DNA glycosylase (359 aa).

A mitochondrion-targeting transit peptide spans 1 to 21 (MWCMRRLPTNSVMTVARKRKQ). Aspartate 162 acts as the Proton acceptor in catalysis.

Belongs to the uracil-DNA glycosylase (UDG) superfamily. UNG family.

The protein localises to the mitochondrion. It localises to the nucleus. It carries out the reaction Hydrolyzes single-stranded DNA or mismatched double-stranded DNA and polynucleotides, releasing free uracil.. Excises uracil residues from the DNA which can arise as a result of misincorporation of dUMP residues by DNA polymerase or due to deamination of cytosine. Not involved in strand-directed mismatch repair. In Saccharomyces cerevisiae (strain ATCC 204508 / S288c) (Baker's yeast), this protein is Uracil-DNA glycosylase.